Here is a 1940-residue protein sequence, read N- to C-terminus: Myosin-3 (1940 aa).

Residues 33-82 (DAKTYCFVVDSKEEYAKGKIKSSQDGKVTVETEDNRTLVVKPEDVYAMNP) form the Myosin N-terminal SH3-like domain. The Myosin motor domain maps to 86 to 779 (DRIEDMAMLT…LLGTLEEMRD (694 aa)). An N6,N6,N6-trimethyllysine modification is found at Lys-130. 179–186 (GESGAGKT) serves as a coordination point for ATP. 2 actin-binding regions span residues 656-678 (LNKL…IPNE) and 758-772 (KFGH…GLLG). Positions 782–811 (LAKLITRTQAVCRGFLMRVEFQKMVQRRES) constitute an IQ domain. Residues 840 to 1933 (LLKSAETEKE…KTRDFTSSRM (1094 aa)) are a coiled coil.

The protein belongs to the TRAFAC class myosin-kinesin ATPase superfamily. Myosin family. Muscle myosin is a hexameric protein that consists of 2 heavy chain subunits (MHC), 2 alkali light chain subunits (MLC) and 2 regulatory light chain subunits (MLC-2). As to expression, expressed in fetal bone, thymus, placenta, heart, brain, and liver.

It is found in the cytoplasm. The protein resides in the myofibril. In terms of biological role, muscle contraction. The protein is Myosin-3 (MYH3) of Homo sapiens (Human).